The chain runs to 169 residues: PTS system glucose-specific EIIA component (169 aa).

Positions 39 to 143 (DVVFAEKIVG…STLTPVVISN (105 aa)) constitute a PTS EIIA type-1 domain. Residues H76 and H91 each contribute to the Zn(2+) site. The Tele-phosphohistidine intermediate; for EIIA activity role is filled by H91. The residue at position 91 (H91) is a Phosphohistidine; by HPr.

As to quaternary structure, heterodimer with glycerol kinase (glpk). Zn(2+) is required as a cofactor.

The protein resides in the cytoplasm. The phosphoenolpyruvate-dependent sugar phosphotransferase system (sugar PTS), a major carbohydrate active transport system, catalyzes the phosphorylation of incoming sugar substrates concomitantly with their translocation across the cell membrane. The enzyme II complex composed of PtsG and Crr is involved in glucose transport. This Escherichia coli O6:H1 (strain CFT073 / ATCC 700928 / UPEC) protein is PTS system glucose-specific EIIA component (crr).